A 576-amino-acid polypeptide reads, in one-letter code: MDGTNNTIPLQFGKQAQTYDINALIARFIRPKESFLINSVEKESESKLNSKSTTLQSSDSEDWDSEENEDDITDVGVPGSHEIMFPGHSKIVTTTTFDKNGSRFYTGSLDNTIHCWDLNGLSATNPHPFKIIDPTDTNADNVGRYPVSKLSCSTKNQILALYTHSQPILYDRDGSLIVRFSKGDQYIRNMYNTKGHIAEITDGCWQPDSSQIFLTTGYDSTARIWDVNRTKSQLEVFVHVPEGSHTGLSRIPVTSCAWNPAKPDNFATAVLDGSIQFWQKGSRTKRPVMKIKDAHLPQQGISCLSFSQDGNYLLSRGEDNALRVWDLRNSNKCVNERIDILTPKAGGNAIFSPTQKLILAGSTAVNSMKAPLFVLDAMTLDTKATLFFDSKSTVTASVSAVSWNEKINQVSLGSADGNAYVLFSPNESIRGVKDAAMRPPKSKHIDDDLSSTVHINSLSGSAGTSDFGLVEETTESASAYFLEARRRRNAVRKDPKLSRQPQVGRLLEENSVDDIPLATMLNEDPREALLKYADVAKSNPMFTKMYSETQPTPIYQGVTEGDISSEEGNPSKKQKR.

Residues 41–78 are disordered; that stretch reads EKESESKLNSKSTTLQSSDSEDWDSEENEDDITDVGVP. Positions 49–58 are enriched in low complexity; sequence NSKSTTLQSS. Acidic residues predominate over residues 59–73; sequence DSEDWDSEENEDDIT. 5 WD repeats span residues 87 to 126, 195 to 235, 248 to 288, 296 to 335, and 393 to 433; these read GHSK…ATNP, GHIA…SQLE, LSRI…KRPV, LPQQ…KCVN, and TVTA…RGVK. A disordered region spans residues 547–576; it reads SETQPTPIYQGVTEGDISSEEGNPSKKQKR.

This is an uncharacterized protein from Schizosaccharomyces pombe (strain 972 / ATCC 24843) (Fission yeast).